The following is a 253-amino-acid chain: MGKWVTIIFVLFLYAIAQQENPAEEVKKQKELLLKEMGILPGDVYAEQGRDMFNKPMGNAGKSCSSCHGQDGRYLRGAYAHMPRYYKDMDAVADLDTRIKYCMEKYMGVGNVKHDLNFKSIATYVATLSNGMKMDVKLTHPKEREMYEKGRELWYARVGKMDFSCAICHDSEAGKRVFLQTVVAVKEDKVATHWPAYRFSNDQLWTMEDRIRGCFGDMRVAPPEHFHWAVVALNLYLSYKAKGGVVRVPGFIY.

An N-terminal signal peptide occupies residues 1-17 (MGKWVTIIFVLFLYAIA). The Cytochrome c domain occupies 44–129 (VYAEQGRDMF…SIATYVATLS (86 aa)). Positions 64, 67, 68, 102, 165, 168, and 169 each coordinate heme c. Arg210 is a substrate binding site. Cys214 serves as a coordination point for heme c. Cys214 serves as the catalytic Cysteine persulfide intermediate.

It belongs to the SoxA family. Heterodimer of SoxA and SoxX. Heme c serves as cofactor. Post-translationally, cysteine persulfide at Cys-214.

Its subcellular location is the periplasm. The catalysed reaction is L-cysteinyl-[SoxY protein] + thiosulfate + 2 Fe(III)-[cytochrome c] = S-sulfosulfanyl-L-cysteinyl-[SoxY protein] + 2 Fe(II)-[cytochrome c] + 2 H(+). The enzyme catalyses S-sulfanyl-L-cysteinyl-[SoxY protein] + thiosulfate + 2 Fe(III)-[cytochrome c] = S-(2-sulfodisulfanyl)-L-cysteinyl-[SoxY protein] + 2 Fe(II)-[cytochrome c] + 2 H(+). In terms of biological role, C-type diheme cytochrome, which is part of the SoxAX cytochrome complex involved in sulfur oxidation. The SoxAX complex catalyzes the formation of a heterodisulfide bond between the conserved cysteine residue on a sulfur carrier SoxYZ complex subunit SoxY and thiosulfate or other inorganic sulfur substrates. This leads to the liberation of two electrons, which may be transferred from the SoxAX complex to another cytochrome c that then channels them into the respiratory electron transport chain. Some electrons may be used for reductive CO(2) fixation. This is L-cysteine S-thiosulfotransferase subunit SoxA from Hydrogenobacter thermophilus (strain DSM 6534 / IAM 12695 / TK-6).